The sequence spans 348 residues: 4-hydroxy-2-oxovalerate aldolase 2 (348 aa).

Residues Leu-5–Leu-256 enclose the Pyruvate carboxyltransferase domain. Arg-13–Asp-14 is a substrate binding site. Asp-14 contacts Mn(2+). Residue His-17 is the Proton acceptor of the active site. Residues Ser-168 and His-195 each coordinate substrate. Mn(2+) is bound by residues His-195 and His-197.

Belongs to the 4-hydroxy-2-oxovalerate aldolase family.

The catalysed reaction is (S)-4-hydroxy-2-oxopentanoate = acetaldehyde + pyruvate. This chain is 4-hydroxy-2-oxovalerate aldolase 2, found in Salinispora arenicola (strain CNS-205).